The following is a 367-amino-acid chain: Chorismate synthase (367 aa).

Arginine 48 provides a ligand contact to NADP(+). Residues 125-127 (RSS), glycine 283, 298-302 (KPTPS), and arginine 324 each bind FMN.

This sequence belongs to the chorismate synthase family. In terms of assembly, homotetramer. FMNH2 is required as a cofactor.

The catalysed reaction is 5-O-(1-carboxyvinyl)-3-phosphoshikimate = chorismate + phosphate. Its pathway is metabolic intermediate biosynthesis; chorismate biosynthesis; chorismate from D-erythrose 4-phosphate and phosphoenolpyruvate: step 7/7. In terms of biological role, catalyzes the anti-1,4-elimination of the C-3 phosphate and the C-6 proR hydrogen from 5-enolpyruvylshikimate-3-phosphate (EPSP) to yield chorismate, which is the branch point compound that serves as the starting substrate for the three terminal pathways of aromatic amino acid biosynthesis. This reaction introduces a second double bond into the aromatic ring system. This chain is Chorismate synthase, found in Agathobacter rectalis (strain ATCC 33656 / DSM 3377 / JCM 17463 / KCTC 5835 / VPI 0990) (Eubacterium rectale).